Reading from the N-terminus, the 855-residue chain is Endochitinase 2 (855 aa).

The signal sequence occupies residues 1–22 (MGPTNILAAFIAVSSLFIQSLA). Positions 29–340 (SNLAVYWGQG…DIMKEVLLRC (312 aa)) constitute a GH18 domain. Asn90 is a glycosylation site (N-linked (GlcNAc...) asparagine). Residue Glu175 is the Proton donor of the active site. The interval 341–672 (DPDPPTSTVT…APSSSTTEDR (332 aa)) is disordered. Low complexity predominate over residues 346 to 400 (TSTVTSTTSASTSTQTSSQSTTMETKTLSASTTPSSPSTVSPSSTMQTTSTGSTS). Positions 401–456 (IETVTTRSQEPPSTTISTRSASTEPVTTRSQEPPSTTISTRSASTETVTTRSQEPP) are enriched in polar residues. The span at 457–483 (STTISTWSASTETSTSSQDSPSTTIST) shows a compositional bias: low complexity. A compositionally biased stretch (polar residues) spans 484–521 (KSAPTGTVTTRSQDLPSTTISTRSPETETETATTKSQG). Low complexity predominate over residues 522 to 533 (SPSITLSTRSSS). The span at 534 to 555 (AETVSTRSQHSSSTTISTKSAP) shows a compositional bias: polar residues. Residues 556 to 567 (TETGTTSEHSTS) are compositionally biased toward low complexity. The span at 568–641 (MPVSTRSAST…SQTPTTIITG (74 aa)) shows a compositional bias: polar residues. Composition is skewed to low complexity over residues 642-652 (TPSDPVSAPTT) and 659-672 (TLTLAPSSSTTEDR). Gly826 carries GPI-anchor amidated glycine lipidation. Residues 827–855 (SAMTVRSMDVVAKALITAGAAVLGLFLGL) constitute a propeptide, removed in mature form.

It belongs to the glycosyl hydrolase 18 family. Chitinase class III subfamily.

The protein localises to the cell membrane. The enzyme catalyses Random endo-hydrolysis of N-acetyl-beta-D-glucosaminide (1-&gt;4)-beta-linkages in chitin and chitodextrins.. May be associated with endosporulation. The chain is Endochitinase 2 (CTS2) from Coccidioides posadasii (strain C735) (Valley fever fungus).